A 95-amino-acid chain; its full sequence is MEIDDIFASKKANPANEKSNDSKSEAKAPKKGAKTKSTPSRPKPTNNQDDLFLDPKGASGRKRTEEGFLVYDEEELNIGQGGGTPDCPFDCQCCF.

Positions 1-64 (MEIDDIFASK…PKGASGRKRT (64 aa)) are disordered. A compositionally biased stretch (basic and acidic residues) spans 18-28 (KSNDSKSEAKA). Positions 35–49 (TKSTPSRPKPTNNQD) are enriched in polar residues.

This is an uncharacterized protein from Schizosaccharomyces pombe (strain 972 / ATCC 24843) (Fission yeast).